The primary structure comprises 319 residues: Lipoyl synthase (319 aa).

The segment at 6–29 (DTVSANPVRPRHPEKAARPDALSP) is disordered. Residues 16–29 (RHPEKAARPDALSP) show a composition bias toward basic and acidic residues. The [4Fe-4S] cluster site is built by C61, C66, C72, C87, C91, C94, and S300. In terms of domain architecture, Radical SAM core spans 73–289 (WDKKHATFMI…QTTAYAKGFL (217 aa)).

It belongs to the radical SAM superfamily. Lipoyl synthase family. [4Fe-4S] cluster is required as a cofactor.

It is found in the cytoplasm. It catalyses the reaction [[Fe-S] cluster scaffold protein carrying a second [4Fe-4S](2+) cluster] + N(6)-octanoyl-L-lysyl-[protein] + 2 oxidized [2Fe-2S]-[ferredoxin] + 2 S-adenosyl-L-methionine + 4 H(+) = [[Fe-S] cluster scaffold protein] + N(6)-[(R)-dihydrolipoyl]-L-lysyl-[protein] + 4 Fe(3+) + 2 hydrogen sulfide + 2 5'-deoxyadenosine + 2 L-methionine + 2 reduced [2Fe-2S]-[ferredoxin]. It functions in the pathway protein modification; protein lipoylation via endogenous pathway; protein N(6)-(lipoyl)lysine from octanoyl-[acyl-carrier-protein]: step 2/2. Its function is as follows. Catalyzes the radical-mediated insertion of two sulfur atoms into the C-6 and C-8 positions of the octanoyl moiety bound to the lipoyl domains of lipoate-dependent enzymes, thereby converting the octanoylated domains into lipoylated derivatives. The sequence is that of Lipoyl synthase from Rhodopseudomonas palustris (strain ATCC BAA-98 / CGA009).